A 174-amino-acid chain; its full sequence is NADH-ubiquinone oxidoreductase chain 6 (174 aa).

4 consecutive transmembrane segments (helical) span residues 24–44 (LAMG…TGLM), 48–68 (FWFS…LFIY), 82–102 (MKLT…NILL), and 143–163 (LMTI…VKIT).

Belongs to the complex I subunit 6 family.

Its subcellular location is the mitochondrion membrane. The catalysed reaction is a ubiquinone + NADH + 5 H(+)(in) = a ubiquinol + NAD(+) + 4 H(+)(out). Core subunit of the mitochondrial membrane respiratory chain NADH dehydrogenase (Complex I) that is believed to belong to the minimal assembly required for catalysis. Complex I functions in the transfer of electrons from NADH to the respiratory chain. The immediate electron acceptor for the enzyme is believed to be ubiquinone. The chain is NADH-ubiquinone oxidoreductase chain 6 (ND6) from Ceratitis capitata (Mediterranean fruit fly).